The sequence spans 566 residues: Oxygen-dependent choline dehydrogenase (566 aa).

7–36 provides a ligand contact to FAD; that stretch reads DYIICGAGSAGNVLATRLTEDPDVTVLLLE. Residues 180–202 form a disordered region; the sequence is NGYQQEGFGPMDRTVTPKGRRAS. Histidine 474 (proton acceptor) is an active-site residue.

This sequence belongs to the GMC oxidoreductase family. It depends on FAD as a cofactor.

The catalysed reaction is choline + A = betaine aldehyde + AH2. The enzyme catalyses betaine aldehyde + NAD(+) + H2O = glycine betaine + NADH + 2 H(+). It functions in the pathway amine and polyamine biosynthesis; betaine biosynthesis via choline pathway; betaine aldehyde from choline (cytochrome c reductase route): step 1/1. Involved in the biosynthesis of the osmoprotectant glycine betaine. Catalyzes the oxidation of choline to betaine aldehyde and betaine aldehyde to glycine betaine at the same rate. The polypeptide is Oxygen-dependent choline dehydrogenase (Burkholderia orbicola (strain MC0-3)).